The sequence spans 87 residues: Small ribosomal subunit protein bS20 (87 aa).

The disordered stretch occupies residues 1 to 25 (MANIKSAKKRAVQSEKHRLHNASRR).

This sequence belongs to the bacterial ribosomal protein bS20 family.

Functionally, binds directly to 16S ribosomal RNA. This Baumannia cicadellinicola subsp. Homalodisca coagulata protein is Small ribosomal subunit protein bS20.